The chain runs to 122 residues: Large ribosomal subunit protein uL14 (122 aa).

It belongs to the universal ribosomal protein uL14 family. As to quaternary structure, part of the 50S ribosomal subunit. Forms a cluster with proteins L3 and L19. In the 70S ribosome, L14 and L19 interact and together make contacts with the 16S rRNA in bridges B5 and B8.

In terms of biological role, binds to 23S rRNA. Forms part of two intersubunit bridges in the 70S ribosome. This Borreliella burgdorferi (strain ZS7) (Borrelia burgdorferi) protein is Large ribosomal subunit protein uL14.